Consider the following 148-residue polypeptide: SsrA-binding protein (148 aa).

It belongs to the SmpB family.

The protein localises to the cytoplasm. In terms of biological role, required for rescue of stalled ribosomes mediated by trans-translation. Binds to transfer-messenger RNA (tmRNA), required for stable association of tmRNA with ribosomes. tmRNA and SmpB together mimic tRNA shape, replacing the anticodon stem-loop with SmpB. tmRNA is encoded by the ssrA gene; the 2 termini fold to resemble tRNA(Ala) and it encodes a 'tag peptide', a short internal open reading frame. During trans-translation Ala-aminoacylated tmRNA acts like a tRNA, entering the A-site of stalled ribosomes, displacing the stalled mRNA. The ribosome then switches to translate the ORF on the tmRNA; the nascent peptide is terminated with the 'tag peptide' encoded by the tmRNA and targeted for degradation. The ribosome is freed to recommence translation, which seems to be the essential function of trans-translation. The protein is SsrA-binding protein of Ehrlichia ruminantium (strain Gardel).